Reading from the N-terminus, the 203-residue chain is Ribosome maturation factor RimP (203 aa).

Residues 183 to 203 are disordered; the sequence is FDDIETEGSAEGTTGSEEENK.

This sequence belongs to the RimP family.

The protein localises to the cytoplasm. Required for maturation of 30S ribosomal subunits. This is Ribosome maturation factor RimP from Ruegeria sp. (strain TM1040) (Silicibacter sp.).